A 266-amino-acid polypeptide reads, in one-letter code: GTP cyclohydrolase FolE2 1 (266 aa).

Belongs to the GTP cyclohydrolase IV family.

The catalysed reaction is GTP + H2O = 7,8-dihydroneopterin 3'-triphosphate + formate + H(+). It functions in the pathway cofactor biosynthesis; 7,8-dihydroneopterin triphosphate biosynthesis; 7,8-dihydroneopterin triphosphate from GTP: step 1/1. Converts GTP to 7,8-dihydroneopterin triphosphate. The protein is GTP cyclohydrolase FolE2 1 of Dechloromonas aromatica (strain RCB).